The chain runs to 542 residues: Chaperonin GroEL 2 (542 aa).

ATP-binding positions include 30–33 (TLGP), K51, 87–91 (DGTTT), G415, and D496.

It belongs to the chaperonin (HSP60) family. As to quaternary structure, forms a cylinder of 14 subunits composed of two heptameric rings stacked back-to-back. Interacts with the co-chaperonin GroES.

It localises to the cytoplasm. It catalyses the reaction ATP + H2O + a folded polypeptide = ADP + phosphate + an unfolded polypeptide.. Its function is as follows. Together with its co-chaperonin GroES, plays an essential role in assisting protein folding. The GroEL-GroES system forms a nano-cage that allows encapsulation of the non-native substrate proteins and provides a physical environment optimized to promote and accelerate protein folding. This chain is Chaperonin GroEL 2, found in Azorhizobium caulinodans (strain ATCC 43989 / DSM 5975 / JCM 20966 / LMG 6465 / NBRC 14845 / NCIMB 13405 / ORS 571).